The following is a 155-amino-acid chain: uncharacterized protein (155 aa).

Disordered stretches follow at residues R24–K63 and K80–E155. At S50 the chain carries Phosphoserine. K108 is modified (N6-acetyllysine). Positions K128–S147 are enriched in polar residues. Residues S130, S147, and S150 each carry the phosphoserine modification.

This is an uncharacterized protein from Mus musculus (Mouse).